The primary structure comprises 193 residues: Xanthine phosphoribosyltransferase (193 aa).

Positions 20 and 27 each coordinate xanthine. 128 to 132 (ANGQA) provides a ligand contact to 5-phospho-alpha-D-ribose 1-diphosphate. K156 provides a ligand contact to xanthine.

Belongs to the purine/pyrimidine phosphoribosyltransferase family. Xpt subfamily. As to quaternary structure, homodimer.

The protein localises to the cytoplasm. It carries out the reaction XMP + diphosphate = xanthine + 5-phospho-alpha-D-ribose 1-diphosphate. The protein operates within purine metabolism; XMP biosynthesis via salvage pathway; XMP from xanthine: step 1/1. Its function is as follows. Converts the preformed base xanthine, a product of nucleic acid breakdown, to xanthosine 5'-monophosphate (XMP), so it can be reused for RNA or DNA synthesis. This is Xanthine phosphoribosyltransferase from Streptococcus pneumoniae (strain P1031).